The primary structure comprises 259 residues: Ribosomal RNA small subunit methyltransferase J (259 aa).

Residues 101–102 (RD), 117–118 (ER), 153–154 (SS), and aspartate 176 each bind S-adenosyl-L-methionine.

Belongs to the methyltransferase superfamily. RsmJ family.

It is found in the cytoplasm. The catalysed reaction is guanosine(1516) in 16S rRNA + S-adenosyl-L-methionine = N(2)-methylguanosine(1516) in 16S rRNA + S-adenosyl-L-homocysteine + H(+). Functionally, specifically methylates the guanosine in position 1516 of 16S rRNA. The chain is Ribosomal RNA small subunit methyltransferase J from Aliivibrio fischeri (strain MJ11) (Vibrio fischeri).